The chain runs to 284 residues: Phosphatidylglycerol--prolipoprotein diacylglyceryl transferase (284 aa).

7 consecutive transmembrane segments (helical) span residues 19 to 39 (ISFY…MWFL), 60 to 80 (LLYL…VLFY), 98 to 118 (GGMS…WFSY), 130 to 150 (FIVP…FING), 199 to 219 (QLYE…IFSC), 225 to 245 (GSIS…IEFF), and 258 to 278 (FITL…IIMY). A 1,2-diacyl-sn-glycero-3-phospho-(1'-sn-glycerol) is bound at residue arginine 143.

Belongs to the Lgt family.

The protein localises to the cell inner membrane. It carries out the reaction L-cysteinyl-[prolipoprotein] + a 1,2-diacyl-sn-glycero-3-phospho-(1'-sn-glycerol) = an S-1,2-diacyl-sn-glyceryl-L-cysteinyl-[prolipoprotein] + sn-glycerol 1-phosphate + H(+). It participates in protein modification; lipoprotein biosynthesis (diacylglyceryl transfer). Its function is as follows. Catalyzes the transfer of the diacylglyceryl group from phosphatidylglycerol to the sulfhydryl group of the N-terminal cysteine of a prolipoprotein, the first step in the formation of mature lipoproteins. The chain is Phosphatidylglycerol--prolipoprotein diacylglyceryl transferase from Blochmanniella floridana.